The chain runs to 362 residues: Myricetin 3'/5'-O-methyltransferase 1 (362 aa).

Asp-229 is an S-adenosyl-L-methionine binding site. Residue His-267 is the Proton acceptor of the active site.

The protein belongs to the class I-like SAM-binding methyltransferase superfamily. Cation-independent O-methyltransferase family. Homodimer. In terms of tissue distribution, mainly expressed in leaves secreting glandular trichomes types 1 and 4 and, to a lesser extent, in storage trichomes type 6.

It catalyses the reaction myricetin + S-adenosyl-L-methionine = laricitrin + S-adenosyl-L-homocysteine + H(+). It carries out the reaction laricitrin + S-adenosyl-L-methionine = syringetin + S-adenosyl-L-homocysteine + H(+). The catalysed reaction is a 3'-hydroxyflavone + S-adenosyl-L-methionine = a 3'-methoxyflavone + S-adenosyl-L-homocysteine + H(+). The enzyme catalyses a 5'-hydroxy-3'-methoxyflavone + S-adenosyl-L-methionine = a 3',5'-dimethoxyflavone + S-adenosyl-L-homocysteine + H(+). It catalyses the reaction quercetin + S-adenosyl-L-methionine = isorhamnetin + S-adenosyl-L-homocysteine + H(+). It carries out the reaction rhamnetin + S-adenosyl-L-methionine = rhamnacene + S-adenosyl-L-homocysteine + H(+). The catalysed reaction is 3',4',5,7-tetrahydroxy-3-methoxyflavone + S-adenosyl-L-methionine = 3,3'-O-dimethylquercetin + S-adenosyl-L-homocysteine + H(+). Its pathway is flavonoid metabolism. Flavonoid 3'/5'-O-methyltransferase involved in the biosynthesis of polymethoxylated flavonoids natural products such as myricetin derivatives, aroma compounds possessing antioxidant properties and exhibiting pharmacological activities such as anti-carcinogen, anti-viral, anti-thrombotic, anti-diabetic, anti-atherosclerotic, and anti-inflammatory effects. Catalyzes S-adenosylmethionine-dependent regioselective 3'/5'-O-methylation of flavonoids; active on various hydroxylated flavonoid substrates, including myricetin and quercetin, but inactive toward kaempferol. Mediates the formation of 3'-methyl derivatives from quercetin, myricetin, 3-methyl quercetin and 7-methyl quercetin (rhamnetin), producing 3'-methyl quercetin (isorhamnetin), 3'-methyl myricetin (laricitrin), 3,3'-dimethyl quercetin (3-O-methylisorhamnetin) and 7,3'-dimethyl quercetin (7-O-methylisorhamnetin), respectively. Triggers the 5'-O-methylation of 3'-methyl myricetin (laricitrin), thus leading to production of 3',5'-dimethyl myricetin (syringetin). In Solanum habrochaites (Wild tomato), this protein is Myricetin 3'/5'-O-methyltransferase 1.